We begin with the raw amino-acid sequence, 753 residues long: Transcription factor SOX-30 (753 aa).

Disordered regions lie at residues 1-45 (MERA…TLSA) and 140-161 (QELG…TGPR). Pro residues predominate over residues 7-22 (EPQPQQRPLRPAPPLL). Residues 337-405 (VKRPMNAFMV…KHREEFPGWV (69 aa)) constitute a DNA-binding region (HMG box). Disordered regions lie at residues 514 to 540 (AGPS…PVSL) and 726 to 753 (PTST…LRDL). 2 stretches are compositionally biased toward polar residues: residues 531–540 (TVKQPTPVSL) and 726–739 (PTST…VNVT).

In terms of assembly, interacts with CTNNB1, competitively inhibiting CTNNB1-TCF7L2/TCF4 interaction.

It is found in the nucleus. The protein resides in the cytoplasm. In terms of biological role, acts both as a transcriptional activator and a repressor. Binds to the DNA sequence 5'-ACAAT-3' and shows a preference for guanine residues surrounding this core motif. Binds to its own promoter and activates its own transcription. Required to activate the expression of postmeiotic genes involved in spermiogenesis. Binds to the promoter region of CTNNB1 and represses its transcription which leads to inhibition of Wnt signaling. Also inhibits Wnt signaling by binding to the CTNNB1 protein, preventing interaction of CTNNB1 with TCF7L2/TCF4. The chain is Transcription factor SOX-30 (SOX30) from Macaca fascicularis (Crab-eating macaque).